The chain runs to 168 residues: G/U mismatch-specific DNA glycosylase (168 aa).

This sequence belongs to the uracil-DNA glycosylase (UDG) superfamily. TDG/mug family. Binds DNA as a monomer.

The protein localises to the cytoplasm. The catalysed reaction is Specifically hydrolyzes mismatched double-stranded DNA and polynucleotides, releasing free uracil.. Its function is as follows. Excises ethenocytosine and uracil, which can arise by alkylation or deamination of cytosine, respectively, from the corresponding mispairs with guanine in ds-DNA. It is capable of hydrolyzing the carbon-nitrogen bond between the sugar-phosphate backbone of the DNA and the mispaired base. The complementary strand guanine functions in substrate recognition. Required for DNA damage lesion repair in stationary-phase cells. This chain is G/U mismatch-specific DNA glycosylase, found in Enterobacter sp. (strain 638).